A 350-amino-acid polypeptide reads, in one-letter code: MKPLVLLVALLLWPSSVPAYPSITVTPDEEQNLNHYIQVLENLVRSVPSGEPGREKKSNSPKHVYSIASKGSKFKELVTHGDASTENDVLTNPISEETTTFPTGGFTPEIGKKKHTESTPFWSIKPNNVSIVLHAEEPYIENEEPEPEPEPAAKQTEAPRMLPVVTESSTSPYVTSYKSPVTTLDKSTGIGISTESEDVPQLSGETAIEKPEEFGKHPESWNNDDILKKILDINSQVQQALLSDTSNPAYREDIEASKDHLKRSLALAAAAEHKLKTMYKSQLLPVGRTSNKIDDIETVINMLCNSRSKLYEYLDIKCVPPEMREKAATVFNTLKNMCRSRRVTALLKVY.

Positions 1–19 (MKPLVLLVALLLWPSSVPA) are cleaved as a signal peptide. Asn128 carries an N-linked (GlcNAc...) asparagine glycan.

This sequence belongs to the SPESP1 family. Glycosylated. In testis there are two predominant forms of 77- and 67-kDa and a form of 47-kDa, whereas in epididymal sperm from caput, corpus, and cauda there are two forms of 47- and 43-kDa. Testis forms contain complex carbohydrate residues. Epididymal sperm forms are N-glycosylated. Then undergoes significant glycosylation in the testis and that the majority of these glycoconjugates are removed by the time sperm reach the caput epididymis. In terms of tissue distribution, highly expressed in testis, where it is localized in the acrosome of postmeiotic stages of spermiogenesis (round and elongating spermatids and in ejaculated spermatozoa) (at protein level). Poorly expressed in placenta and fetal lung.

Its subcellular location is the cytoplasmic vesicle. The protein localises to the secretory vesicle. It is found in the acrosome. Functionally, involved in fertilization ability of sperm. The protein is Sperm equatorial segment protein 1 of Homo sapiens (Human).